The sequence spans 142 residues: Small ribosomal subunit protein bS16 (142 aa).

Positions 101–142 (RPSFDALGGDDAGKGEAITQKKKAEKKDEAAAESSSSESTEA) are disordered. Over residues 132-142 (AESSSSESTEA) the composition is skewed to low complexity.

Belongs to the bacterial ribosomal protein bS16 family.

The polypeptide is Small ribosomal subunit protein bS16 (Streptomyces avermitilis (strain ATCC 31267 / DSM 46492 / JCM 5070 / NBRC 14893 / NCIMB 12804 / NRRL 8165 / MA-4680)).